Here is a 71-residue protein sequence, read N- to C-terminus: UPF0435 protein BLi00816/BL03111 (71 aa).

Belongs to the UPF0435 family.

The protein is UPF0435 protein BLi00816/BL03111 of Bacillus licheniformis (strain ATCC 14580 / DSM 13 / JCM 2505 / CCUG 7422 / NBRC 12200 / NCIMB 9375 / NCTC 10341 / NRRL NRS-1264 / Gibson 46).